Here is a 358-residue protein sequence, read N- to C-terminus: Methylthioribose-1-phosphate isomerase (358 aa).

Substrate contacts are provided by residues 54–56 and glutamine 205; that span reads CGA. The active-site Proton donor is the aspartate 246. A substrate-binding site is contributed by 256-257; that stretch reads NQ.

The protein belongs to the eIF-2B alpha/beta/delta subunits family. MtnA subfamily.

It catalyses the reaction 5-(methylsulfanyl)-alpha-D-ribose 1-phosphate = 5-(methylsulfanyl)-D-ribulose 1-phosphate. It participates in amino-acid biosynthesis; L-methionine biosynthesis via salvage pathway; L-methionine from S-methyl-5-thio-alpha-D-ribose 1-phosphate: step 1/6. Its function is as follows. Catalyzes the interconversion of methylthioribose-1-phosphate (MTR-1-P) into methylthioribulose-1-phosphate (MTRu-1-P). This Pseudomonas fluorescens (strain ATCC BAA-477 / NRRL B-23932 / Pf-5) protein is Methylthioribose-1-phosphate isomerase.